The chain runs to 270 residues: MLPYPQIDPVAVAIGPLQIHWYGLMYLVGIGGAWLLASRRLNKFDPTWTKEKLSDLIFWLAMGVIVGGRLGYVLFYDLSAYIANPLLIFEVWKGGMAFHGGFVGVMIAAWWFGKRNGKSFFQLMDFVAPLVPIGLGAGRIGNFINAELWGKPTDVPWAMVFPPFSDPAQLARHPSQLYQFALEGVALFIILNLYARKPRPTMAVSGMFALFYGIFRFVVEFVRVPDAQLGYLAWGWVTMGQILSLPMIIAGLLLIWLAYKRDPSASKAAA.

A run of 7 helical transmembrane segments spans residues 10-30, 56-76, 92-112, 120-140, 175-195, 202-222, and 237-257; these read VAVAIGPLQIHWYGLMYLVGI, LIFWLAMGVIVGGRLGYVLFY, WKGGMAFHGGFVGVMIAAWWF, FFQLMDFVAPLVPIGLGAGRI, SQLYQFALEGVALFIILNLYA, MAVSGMFALFYGIFRFVVEFV, and VTMGQILSLPMIIAGLLLIWL. Residue Arg-139 coordinates a 1,2-diacyl-sn-glycero-3-phospho-(1'-sn-glycerol).

This sequence belongs to the Lgt family.

The protein resides in the cell inner membrane. It catalyses the reaction L-cysteinyl-[prolipoprotein] + a 1,2-diacyl-sn-glycero-3-phospho-(1'-sn-glycerol) = an S-1,2-diacyl-sn-glyceryl-L-cysteinyl-[prolipoprotein] + sn-glycerol 1-phosphate + H(+). The protein operates within protein modification; lipoprotein biosynthesis (diacylglyceryl transfer). Catalyzes the transfer of the diacylglyceryl group from phosphatidylglycerol to the sulfhydryl group of the N-terminal cysteine of a prolipoprotein, the first step in the formation of mature lipoproteins. The sequence is that of Phosphatidylglycerol--prolipoprotein diacylglyceryl transferase from Pseudomonas syringae pv. syringae (strain B728a).